A 432-amino-acid chain; its full sequence is Phosphomevalonate kinase (432 aa).

ATP is bound by residues lysine 10 and 142–148 (VEKTGLG).

Belongs to the GHMP kinase family. Mevalonate kinase subfamily.

Its subcellular location is the cytoplasm. The catalysed reaction is (R)-5-phosphomevalonate + ATP = (R)-5-diphosphomevalonate + ADP. It functions in the pathway isoprenoid biosynthesis; isopentenyl diphosphate biosynthesis via mevalonate pathway; isopentenyl diphosphate from (R)-mevalonate: step 2/3. In terms of biological role, phosphomevalonate kinase; part of the second module of ergosterol biosynthesis pathway that includes the middle steps of the pathway. ERG8 converts 5-phosphomevalonate to 5-diphosphomevalonate. The second module is carried out in the vacuole and involves the formation of farnesyl diphosphate, which is also an important intermediate in the biosynthesis of ubiquinone, dolichol, heme and prenylated proteins. Activity by the mevalonate kinase ERG12 first converts mevalonate into 5-phosphomevalonate. 5-phosphomevalonate is then further converted to 5-diphosphomevalonate by the phosphomevalonate kinase ERG8. The diphosphomevalonate decarboxylase MVD then produces isopentenyl diphosphate. The isopentenyl-diphosphate delta-isomerase IDI1 then catalyzes the 1,3-allylic rearrangement of the homoallylic substrate isopentenyl (IPP) to its highly electrophilic allylic isomer, dimethylallyl diphosphate (DMAPP). Finally the farnesyl diphosphate synthase ERG20 catalyzes the sequential condensation of isopentenyl pyrophosphate with dimethylallyl pyrophosphate, and then with the resultant geranylpyrophosphate to the ultimate product farnesyl pyrophosphate. The chain is Phosphomevalonate kinase from Candida albicans (strain SC5314 / ATCC MYA-2876) (Yeast).